A 369-amino-acid chain; its full sequence is Putative agmatine deiminase (369 aa).

Cys-361 serves as the catalytic Amidino-cysteine intermediate.

The protein belongs to the agmatine deiminase family.

The enzyme catalyses agmatine + H2O = N-carbamoylputrescine + NH4(+). The protein is Putative agmatine deiminase of Streptococcus mutans serotype c (strain ATCC 700610 / UA159).